The following is a 239-amino-acid chain: tRNA (guanine-N(1)-)-methyltransferase (239 aa).

S-adenosyl-L-methionine is bound by residues Gly110 and 129–134 (LGDFVL).

Belongs to the RNA methyltransferase TrmD family. Homodimer.

Its subcellular location is the cytoplasm. The catalysed reaction is guanosine(37) in tRNA + S-adenosyl-L-methionine = N(1)-methylguanosine(37) in tRNA + S-adenosyl-L-homocysteine + H(+). Functionally, specifically methylates guanosine-37 in various tRNAs. This is tRNA (guanine-N(1)-)-methyltransferase from Clostridium beijerinckii (strain ATCC 51743 / NCIMB 8052) (Clostridium acetobutylicum).